A 454-amino-acid polypeptide reads, in one-letter code: Rhizobactin siderophore biosynthesis protein RhbE (454 aa).

7 to 13 contacts FAD; it reads AGIGIGP.

The protein belongs to the lysine N(6)-hydroxylase/L-ornithine N(5)-oxygenase family. It depends on FAD as a cofactor.

It functions in the pathway siderophore biosynthesis; rhizobactin biosynthesis. This is Rhizobactin siderophore biosynthesis protein RhbE (rhbE) from Rhizobium meliloti (strain 1021) (Ensifer meliloti).